The chain runs to 86 residues: Omega-theraphotoxin-Hhn1f 2 (86 aa).

An N-terminal signal peptide occupies residues 1-21; it reads MKSIVFVALFGLALLAVVCSA. A propeptide spanning residues 22 to 50 is cleaved from the precursor; it reads SEDAHKELLKEVVRAVVVDKTDAVQAEER. Intrachain disulfides connect Cys52–Cys66, Cys59–Cys71, and Cys65–Cys78.

The protein belongs to the neurotoxin 10 (Hwtx-1) family. 17 (Hntx-9) subfamily. As to expression, expressed by the venom gland.

It localises to the secreted. Its function is as follows. Ion channel inhibitor. This chain is Omega-theraphotoxin-Hhn1f 2, found in Cyriopagopus hainanus (Chinese bird spider).